The chain runs to 450 residues: Transcription factor AP-2 gamma (450 aa).

A Glycyl lysine isopeptide (Lys-Gly) (interchain with G-Cter in SUMO) cross-link involves residue K10. 2 disordered regions span residues 13–63 and 90–126; these read EDCE…FPPP and LHQPAPTGSQQQAWPGRQSQEGAGLPSHHGRPAGLLP. Positions 59-64 match the PPxY motif motif; that stretch reads YFPPPY. Over residues 95–110 the composition is skewed to polar residues; the sequence is PTGSQQQAWPGRQSQE. Phosphoserine; by PKA is present on S252. The tract at residues 293–424 is H-S-H (helix-span-helix), dimerization; that stretch reads RRKAAHVTLL…YIKEALIVID (132 aa). The segment at 431–450 is disordered; sequence GDQSPADSNKTLEKMEKHRK. S434 is subject to Phosphoserine. A compositionally biased stretch (basic and acidic residues) spans 440 to 450; that stretch reads KTLEKMEKHRK.

It belongs to the AP-2 family. As to quaternary structure, binds DNA as a dimer. Can form homodimers or heterodimers with other AP-2 family members. Interacts with WWOX. Interacts with UBE2I. Interacts with KCTD1; this interaction represses transcription activation. Interacts with CITED2 (via C-terminus); the interaction stimulates TFAP2B-transcriptional activity. Interacts with CITED4. Interacts with MTA1. Post-translationally, sumoylated on Lys-10; which inhibits transcriptional activity.

It localises to the nucleus. In terms of biological role, sequence-specific DNA-binding transcription factor that interacts with cellular enhancer elements to regulate transcription of selected genes, and which plays a key role in early embryonic development. AP-2 factors bind to the consensus sequence 5'-GCCNNNGGC-3' and activate genes involved in a large spectrum of important biological functions. TFAP2C plays a key role in early embryonic development by regulating both inner cell mass (ICM) and trophectoderm differentiation. At the 8-cell stage, during morula development, controls expression of cell-polarity genes. Upon trophoblast commitment, binds to late trophectoderm genes in blastocysts together with CDX2, and later to extra-embryonic ectoderm genes together with SOX2. Binds to both closed and open chromatin with other transcription factors. Involved in the MTA1-mediated epigenetic regulation of ESR1 expression in breast cancer. The protein is Transcription factor AP-2 gamma (TFAP2C) of Homo sapiens (Human).